The chain runs to 224 residues: Adenylate kinase (224 aa).

Glycine 10–threonine 15 lines the ATP pocket. The segment at serine 30–isoleucine 59 is NMP. AMP-binding positions include serine 31, arginine 36, aspartate 57–isoleucine 59, glycine 83–arginine 86, and glutamine 90. The segment at glycine 124–aspartate 161 is LID. Arginine 125 lines the ATP pocket. Residues cysteine 128 and cysteine 131 each contribute to the Zn(2+) site. Residue valine 134–tyrosine 135 participates in ATP binding. 2 residues coordinate Zn(2+): cysteine 148 and cysteine 151. AMP contacts are provided by arginine 158 and arginine 169. ATP is bound at residue glycine 197.

Belongs to the adenylate kinase family. As to quaternary structure, monomer.

The protein localises to the cytoplasm. The catalysed reaction is AMP + ATP = 2 ADP. The protein operates within purine metabolism; AMP biosynthesis via salvage pathway; AMP from ADP: step 1/1. Its function is as follows. Catalyzes the reversible transfer of the terminal phosphate group between ATP and AMP. Plays an important role in cellular energy homeostasis and in adenine nucleotide metabolism. This is Adenylate kinase from Thermococcus kodakarensis (strain ATCC BAA-918 / JCM 12380 / KOD1) (Pyrococcus kodakaraensis (strain KOD1)).